Reading from the N-terminus, the 393-residue chain is Formate-dependent phosphoribosylglycinamide formyltransferase (393 aa).

N(1)-(5-phospho-beta-D-ribosyl)glycinamide is bound by residues 22–23 (EL) and Glu-82. ATP-binding positions include Arg-114, Lys-155, 160–165 (SSGKGQ), 195–198 (EGFI), and Glu-203. In terms of domain architecture, ATP-grasp spans 119–308 (RLAAEELDLP…QFALHARAIL (190 aa)). 2 residues coordinate Mg(2+): Glu-267 and Glu-279. Residues Asp-286, Lys-356, and 363–364 (RR) each bind N(1)-(5-phospho-beta-D-ribosyl)glycinamide.

The protein belongs to the PurK/PurT family. Homodimer.

It carries out the reaction N(1)-(5-phospho-beta-D-ribosyl)glycinamide + formate + ATP = N(2)-formyl-N(1)-(5-phospho-beta-D-ribosyl)glycinamide + ADP + phosphate + H(+). It participates in purine metabolism; IMP biosynthesis via de novo pathway; N(2)-formyl-N(1)-(5-phospho-D-ribosyl)glycinamide from N(1)-(5-phospho-D-ribosyl)glycinamide (formate route): step 1/1. Functionally, involved in the de novo purine biosynthesis. Catalyzes the transfer of formate to 5-phospho-ribosyl-glycinamide (GAR), producing 5-phospho-ribosyl-N-formylglycinamide (FGAR). Formate is provided by PurU via hydrolysis of 10-formyl-tetrahydrofolate. This is Formate-dependent phosphoribosylglycinamide formyltransferase from Pseudomonas fluorescens (strain ATCC BAA-477 / NRRL B-23932 / Pf-5).